Consider the following 242-residue polypeptide: ATP-dependent dethiobiotin synthetase BioD (242 aa).

15–20 (DVGKTV) provides a ligand contact to ATP. Position 19 (Thr19) interacts with Mg(2+). The active site involves Lys40. Residue Ser44 participates in substrate binding. Residue Glu117 participates in Mg(2+) binding. Residues 117 to 120 (EGAG), 178 to 179 (NQ), and 208 to 210 (PYS) each bind ATP.

The protein belongs to the dethiobiotin synthetase family. In terms of assembly, homodimer. It depends on Mg(2+) as a cofactor.

It is found in the cytoplasm. The catalysed reaction is (7R,8S)-7,8-diammoniononanoate + CO2 + ATP = (4R,5S)-dethiobiotin + ADP + phosphate + 3 H(+). Its pathway is cofactor biosynthesis; biotin biosynthesis; biotin from 7,8-diaminononanoate: step 1/2. Functionally, catalyzes a mechanistically unusual reaction, the ATP-dependent insertion of CO2 between the N7 and N8 nitrogen atoms of 7,8-diaminopelargonic acid (DAPA, also called 7,8-diammoniononanoate) to form a ureido ring. The chain is ATP-dependent dethiobiotin synthetase BioD from Halalkalibacterium halodurans (strain ATCC BAA-125 / DSM 18197 / FERM 7344 / JCM 9153 / C-125) (Bacillus halodurans).